The following is a 115-amino-acid chain: Large ribosomal subunit protein bL19 (115 aa).

This sequence belongs to the bacterial ribosomal protein bL19 family.

Its function is as follows. This protein is located at the 30S-50S ribosomal subunit interface and may play a role in the structure and function of the aminoacyl-tRNA binding site. This chain is Large ribosomal subunit protein bL19, found in Brevibacillus brevis (strain 47 / JCM 6285 / NBRC 100599).